The following is a 115-amino-acid chain: Large ribosomal subunit protein bL20 (115 aa).

The protein belongs to the bacterial ribosomal protein bL20 family.

In terms of biological role, binds directly to 23S ribosomal RNA and is necessary for the in vitro assembly process of the 50S ribosomal subunit. It is not involved in the protein synthesizing functions of that subunit. This is Large ribosomal subunit protein bL20 (rplT) from Borreliella burgdorferi (strain ATCC 35210 / DSM 4680 / CIP 102532 / B31) (Borrelia burgdorferi).